A 196-amino-acid chain; its full sequence is Interleukin-18 (196 aa).

A propeptide spanning residues 1-29 is cleaved from the precursor; the sequence is MSCEEIAVCAVRLRENLCLYFEELECDAF.

The protein belongs to the IL-1 family. In terms of assembly, forms a ternary complex with ligand-binding receptor subunit IL18R1 and signaling receptor subunit IL18RAP at the plasma membrane. Mature IL18 first binds to IL18R1 forming a low affinity binary complex, which then interacts with IL18RAP to form a high affinity ternary complex that signals inside the cell. Interacts with cargo receptor TMED10; the interaction mediates the translocation from the cytoplasm into the ERGIC (endoplasmic reticulum-Golgi intermediate compartment) and thereby secretion. Post-translationally, the pro-IL-18 precursor is processed by CASP1 or CASP4 to yield the active form.

The protein resides in the cytoplasm. The protein localises to the secreted. Its function is as follows. Augments natural killer cell activity in spleen cells and stimulates interferon gamma production in T-helper type I cells. Involved in transduction of inflammation downstream of pyroptosis: its mature form is specifically released in the extracellular milieu by passing through the gasdermin-D (GSDMD) pore. This Gallus gallus (Chicken) protein is Interleukin-18 (IL18).